Here is a 406-residue protein sequence, read N- to C-terminus: Pyridinium-3,5-bisthiocarboxylic acid mononucleotide nickel insertion protein (406 aa).

This sequence belongs to the LarC family.

It carries out the reaction Ni(II)-pyridinium-3,5-bisthiocarboxylate mononucleotide = pyridinium-3,5-bisthiocarboxylate mononucleotide + Ni(2+). In terms of biological role, involved in the biosynthesis of a nickel-pincer cofactor ((SCS)Ni(II) pincer complex). Binds Ni(2+), and functions in nickel delivery to pyridinium-3,5-bisthiocarboxylic acid mononucleotide (P2TMN), to form the mature cofactor. Is thus probably required for the activation of nickel-pincer cofactor-dependent enzymes. The sequence is that of Pyridinium-3,5-bisthiocarboxylic acid mononucleotide nickel insertion protein from Akkermansia muciniphila (strain ATCC BAA-835 / DSM 22959 / JCM 33894 / BCRC 81048 / CCUG 64013 / CIP 107961 / Muc).